The sequence spans 281 residues: 2-dehydro-3-deoxyphosphooctonate aldolase (281 aa).

Belongs to the KdsA family.

It is found in the cytoplasm. It carries out the reaction D-arabinose 5-phosphate + phosphoenolpyruvate + H2O = 3-deoxy-alpha-D-manno-2-octulosonate-8-phosphate + phosphate. It functions in the pathway carbohydrate biosynthesis; 3-deoxy-D-manno-octulosonate biosynthesis; 3-deoxy-D-manno-octulosonate from D-ribulose 5-phosphate: step 2/3. It participates in bacterial outer membrane biogenesis; lipopolysaccharide biosynthesis. This is 2-dehydro-3-deoxyphosphooctonate aldolase from Pseudomonas fluorescens (strain SBW25).